We begin with the raw amino-acid sequence, 181 residues long: ADP-ribosylation factor 1-like 2 (181 aa).

Glycine 2 is lipidated: N-myristoyl glycine. The interval 3 to 16 (NVFGSLFKGLFGKR) is important for the stable binding to the membranes. Residues 24–32 (GLDAAGKTT), 126–129 (NKQD), and alanine 160 contribute to the GTP site.

This sequence belongs to the small GTPase superfamily. Arf family. Expressed in hypodermis, intestine, spermatheca, uterus, gonadal sheath, vulva cells, pharynx muscle, body wall muscle, head neurons, ventral nerve cord.

The protein localises to the golgi apparatus membrane. The enzyme catalyses GTP + H2O = GDP + phosphate + H(+). Alternates between an inactive GDP-bound form and an active GTP-bound form. Activated by a guanine nucleotide-exchange factor (GEF) and inactivated by GTPase-activating protein (GAP). In terms of biological role, small GTPase involved in protein trafficking between different compartments. Modulates vesicle budding and uncoating within the Golgi complex. In its GTP-bound form, triggers the recruitment of coatomer proteins to the Golgi membrane. The hydrolysis of ARF1-bound GTP, which is mediated by ARFGAPs proteins, is required for dissociation of coat proteins from Golgi membranes and vesicles. Involved in endoplasmic reticulum dynamics during embryogenesis. Also required for adult germline function. Plays a role in cell shedding during embryogenesis probably by promoting the endocytosis of cell adhesion molecules. During neurogenesis, involved in cell autonomous Q.p neuroblast asymmetric divisions that generate one precursor cell and one apoptotic cell, probably by controlling endocytosis. Plays a role in maintaining mitochondrial morphology. The sequence is that of ADP-ribosylation factor 1-like 2 from Caenorhabditis elegans.